The following is a 117-amino-acid chain: uncharacterized protein (117 aa).

The signal sequence occupies residues 1 to 20 (MAAVHLYIISFTALMISSTS).

This is an uncharacterized protein from Saccharomyces cerevisiae (strain ATCC 204508 / S288c) (Baker's yeast).